Reading from the N-terminus, the 1463-residue chain is DNA polymerase III PolC-type (1463 aa).

In terms of domain architecture, Exonuclease spans 425–581; that stretch reads YVVFDVETTG…YDAEATGRLL (157 aa).

It belongs to the DNA polymerase type-C family. PolC subfamily.

It localises to the cytoplasm. It catalyses the reaction DNA(n) + a 2'-deoxyribonucleoside 5'-triphosphate = DNA(n+1) + diphosphate. Functionally, required for replicative DNA synthesis. This DNA polymerase also exhibits 3' to 5' exonuclease activity. This chain is DNA polymerase III PolC-type, found in Streptococcus suis (strain 98HAH33).